Reading from the N-terminus, the 186-residue chain is Translation initiation factor IF-3 (186 aa).

It belongs to the IF-3 family. Monomer.

The protein localises to the cytoplasm. Functionally, IF-3 binds to the 30S ribosomal subunit and shifts the equilibrium between 70S ribosomes and their 50S and 30S subunits in favor of the free subunits, thus enhancing the availability of 30S subunits on which protein synthesis initiation begins. This is Translation initiation factor IF-3 from Borreliella burgdorferi (strain ATCC 35210 / DSM 4680 / CIP 102532 / B31) (Borrelia burgdorferi).